Here is a 75-residue protein sequence, read N- to C-terminus: Small ribosomal subunit protein bS18 (75 aa).

The protein belongs to the bacterial ribosomal protein bS18 family. As to quaternary structure, part of the 30S ribosomal subunit. Forms a tight heterodimer with protein bS6.

Its function is as follows. Binds as a heterodimer with protein bS6 to the central domain of the 16S rRNA, where it helps stabilize the platform of the 30S subunit. This chain is Small ribosomal subunit protein bS18, found in Laribacter hongkongensis (strain HLHK9).